The sequence spans 139 residues: Large-conductance mechanosensitive channel (139 aa).

Transmembrane regions (helical) follow at residues 14–34 and 81–101; these read VIDL…INSL and GSFL…FMIV.

Belongs to the MscL family. As to quaternary structure, homopentamer.

The protein resides in the cell membrane. Its function is as follows. Channel that opens in response to stretch forces in the membrane lipid bilayer. May participate in the regulation of osmotic pressure changes within the cell. This is Large-conductance mechanosensitive channel from Chloroflexus aurantiacus (strain ATCC 29366 / DSM 635 / J-10-fl).